We begin with the raw amino-acid sequence, 149 residues long: Transcription antitermination protein NusB (149 aa).

This sequence belongs to the NusB family.

In terms of biological role, involved in transcription antitermination. Required for transcription of ribosomal RNA (rRNA) genes. Binds specifically to the boxA antiterminator sequence of the ribosomal RNA (rrn) operons. This is Transcription antitermination protein NusB from Sphingopyxis alaskensis (strain DSM 13593 / LMG 18877 / RB2256) (Sphingomonas alaskensis).